A 399-amino-acid chain; its full sequence is Elongation factor Tu (399 aa).

The tr-type G domain occupies 10 to 204 (KPHVNIGTIG…AVDASIPEPE (195 aa)). The G1 stretch occupies residues 19–26 (GHVDHGKT). Position 19–26 (19–26 (GHVDHGKT)) interacts with GTP. A Mg(2+)-binding site is contributed by Thr26. The segment at 60-64 (GITIN) is G2. The interval 81–84 (DCPG) is G3. Residues 81–85 (DCPGH) and 136–139 (NKCD) each bind GTP. The tract at residues 136–139 (NKCD) is G4. Residues 174 to 176 (SGL) are G5.

This sequence belongs to the TRAFAC class translation factor GTPase superfamily. Classic translation factor GTPase family. EF-Tu/EF-1A subfamily. Monomer.

The protein localises to the cytoplasm. The catalysed reaction is GTP + H2O = GDP + phosphate + H(+). Its function is as follows. GTP hydrolase that promotes the GTP-dependent binding of aminoacyl-tRNA to the A-site of ribosomes during protein biosynthesis. This is Elongation factor Tu from Prochlorococcus marinus (strain SARG / CCMP1375 / SS120).